Reading from the N-terminus, the 152-residue chain is Transcriptional regulator MraZ (152 aa).

SpoVT-AbrB domains follow at residues 5–52 and 81–124; these read ASAI…PIQE and AHEC…DEAA.

The protein belongs to the MraZ family. In terms of assembly, forms oligomers.

The protein resides in the cytoplasm. The protein localises to the nucleoid. This chain is Transcriptional regulator MraZ, found in Shewanella halifaxensis (strain HAW-EB4).